Reading from the N-terminus, the 1048-residue chain is MSNKTGGKRPATTNSDIPNHNMVSEVPPERPSVRATRTARKAVAFGKRSHSMKRNPNAPVTKAGWLFKQASSGVKQWNKRWFVLVDRCLFYYKDEKEESILGSIPLLSFRVAAVQPSDNISRKHTFKAEHAGVRTYFFSAESPEEQEAWIQAMGEAARVQIPPAQKSVPQAVRHSHEKPDSENVPPSKHHQQPPHNSLPKPEPEAKTRGEGDGRGCEKAERRPERPEVKKEPPVKANGLPAGPEPASEPGSPYPEGPRVPGGGEQPAQPNGWQYHSPSRPGSTAFPSQDGETGGHRRSFPPRTNPDKIAQRKSSMNQLQQWVNLRRGVPPPEDLRSPSRFYPVSRRVPEYYGPYSSQYPDDYQYYPPGVRPESICSMPAYDRISPPWALEDKRHAFRNGGGPAYQLREWKEPASYGRQDATVWIPSPSRQPVYYDELDAASSSLRRLSLQPRSHSVPRSPSQGSYSRARIYSPVRSPSARFERLPPRSEDIYADPAAYVMRRSISSPKVPPYPEVFRDSLHTYKLNEQDTDKLLGKLCEQNKVVREQDRLVQQLRAEKESLESALMGTHQELEMFGSQPAYPEKLRHKKDSLQNQLINIRVELSQATTALTNSTIEYEHLESEVSALHDDLWEQLNLDTQNEVLNRQIQKEIWRIQDVMEGLRKNNPSRGTDTAKHRGGLGPSATYSSNSPASPLSSASLTSPLSPFSLVSGSQGSPTKPGSNEPKANYEQSKKDPHQTLPLDTPRDISLVPTRQEVEAEKQAALNKVGVVPPRTKSPTDDEVTPSAVVRRNASGLTNGLSSQERPKSAVFPGEGKVKMSVEEQIDRMRRHQSGSMREKRRSLQLPASPAPDPSPRPAYKVVRRHRSIHEVDISNLEAALRAEEPGGHAYETPREEIARLRKMELEPQHYDVDINKELSTPDKVLIPERYIDLEPDTPLSPEELKEKQKKVERIKTLIAKSSMQNVVPIGEGDSVDVPQDSESQLQEQEKRIEISCALATEASRRGRMLSVQCATPSPPTSPASPAPPANPLSSESPRGADSSYTMRV.

The span at 1–22 (MSNKTGGKRPATTNSDIPNHNM) shows a compositional bias: polar residues. Residues 1-36 (MSNKTGGKRPATTNSDIPNHNMVSEVPPERPSVRAT) form a disordered region. The region spanning 59–158 (PVTKAGWLFK…WIQAMGEAAR (100 aa)) is the PH domain. Disordered stretches follow at residues 165–318 (QKSV…MNQL) and 448–467 (SLQP…SYSR). The segment covering 201–233 (PEPEAKTRGEGDGRGCEKAERRPERPEVKKEPP) has biased composition (basic and acidic residues). Serine 247 and serine 251 each carry phosphoserine. Positions 267–290 (AQPNGWQYHSPSRPGSTAFPSQDG) are enriched in polar residues. Serine 314, serine 459, serine 461, and serine 472 each carry phosphoserine. A compositionally biased stretch (polar residues) spans 456 to 465 (VPRSPSQGSY). Phosphotyrosine is present on tyrosine 492. Serine 591 carries the phosphoserine modification. The segment at 663-746 (RKNNPSRGTD…HQTLPLDTPR (84 aa)) is disordered. Positions 687–711 (SSNSPASPLSSASLTSPLSPFSLVS) are enriched in low complexity. Residues 712 to 721 (GSQGSPTKPG) are compositionally biased toward polar residues. Phosphothreonine is present on threonine 744. Serine 777 carries the phosphoserine modification. Position 784 is a phosphothreonine (threonine 784). The disordered stretch occupies residues 793–858 (ASGLTNGLSS…PAPDPSPRPA (66 aa)). The span at 794–803 (SGLTNGLSSQ) shows a compositional bias: polar residues. Residue serine 801 is modified to Phosphoserine. Basic and acidic residues predominate over residues 815-827 (GKVKMSVEEQIDR). Residues 828-842 (MRRHQSGSMREKRRS) show a composition bias toward basic residues. Phosphoserine is present on residues serine 848, serine 854, and serine 867. A Phosphothreonine modification is found at threonine 920. A Phosphoserine modification is found at serine 940. Disordered stretches follow at residues 968-989 (PIGE…QEQE) and 1005-1048 (RGRM…TMRV). A Phosphothreonine modification is found at threonine 1015. Positions 1016–1030 (PSPPTSPASPAPPAN) are enriched in pro residues. Serine 1017 is modified (phosphoserine). The residue at position 1020 (threonine 1020) is a Phosphothreonine. 2 positions are modified to phosphoserine: serine 1021 and serine 1024.

In terms of tissue distribution, highly expressed in heart, kidney and throughout the brain.

This Homo sapiens (Human) protein is Pleckstrin homology domain-containing family A member 6 (PLEKHA6).